A 425-amino-acid polypeptide reads, in one-letter code: Adenosine 3'-phospho 5'-phosphosulfate transporter 1 (425 aa).

9 helical membrane-spanning segments follow: residues 27 to 47 (FLILLGYSTVATPAAILIYYV), 102 to 122 (VIILLLFFFSGIQVTLVAMGV), 147 to 167 (TQFLIFCNRIVALVLSLMILA), 232 to 252 (YSWFEYGCGCTIAFGASLFLL), 263 to 283 (ITYTSFSGMILMAGYLLFDAF), 303 to 323 (MMFGVNFFSAILCAVSLIEQG), 342 to 360 (VFLLSLSGAIGQIFIYSTI), 365 to 387 (PIVFAVIMTIRQMLSIVLSTIMY), and 391 to 411 (LTFLAAIGFMIVFAAIFVDIH).

Belongs to the nucleotide-sugar transporter family. SLC35B subfamily.

The protein localises to the golgi apparatus membrane. Mediates the transport of adenosine 3'-phospho 5'-phosphosulfate (PAPS), from cytosol into Golgi. PAPS is a universal sulfuryl donor for sulfation events that take place in the Golgi. This Caenorhabditis elegans protein is Adenosine 3'-phospho 5'-phosphosulfate transporter 1 (pst-1).